We begin with the raw amino-acid sequence, 232 residues long: Endonuclease NucS (232 aa).

Belongs to the NucS endonuclease family.

The protein localises to the cytoplasm. Cleaves both 3' and 5' ssDNA extremities of branched DNA structures. The protein is Endonuclease NucS of Mycobacteroides abscessus (strain ATCC 19977 / DSM 44196 / CCUG 20993 / CIP 104536 / JCM 13569 / NCTC 13031 / TMC 1543 / L948) (Mycobacterium abscessus).